The chain runs to 384 residues: Lipid-A-disaccharide synthase (384 aa).

This sequence belongs to the LpxB family.

It carries out the reaction a lipid X + a UDP-2-N,3-O-bis[(3R)-3-hydroxyacyl]-alpha-D-glucosamine = a lipid A disaccharide + UDP + H(+). It participates in bacterial outer membrane biogenesis; LPS lipid A biosynthesis. Condensation of UDP-2,3-diacylglucosamine and 2,3-diacylglucosamine-1-phosphate to form lipid A disaccharide, a precursor of lipid A, a phosphorylated glycolipid that anchors the lipopolysaccharide to the outer membrane of the cell. The protein is Lipid-A-disaccharide synthase of Cellvibrio japonicus (strain Ueda107) (Pseudomonas fluorescens subsp. cellulosa).